The chain runs to 196 residues: MAENERTTENFQPQDPSYAEAATTEASAAEATGFIARIDQLAAENSDLQKKLADYEQKYTRLMADFDNFRKRTQREKDELAYFVSAKLLKDILPVFDNFDRARAFAQPDNEREEKLHNSYQQVYRQFLSVLEKMGVTAMEAIGQPFDPAQHEAILREESAGVSQETVVAELQKGYLLADKVLRPAMVKVAIPEAGS.

The segment at 1–24 (MAENERTTENFQPQDPSYAEAATT) is disordered.

Belongs to the GrpE family. In terms of assembly, homodimer.

It localises to the cytoplasm. In terms of biological role, participates actively in the response to hyperosmotic and heat shock by preventing the aggregation of stress-denatured proteins, in association with DnaK and GrpE. It is the nucleotide exchange factor for DnaK and may function as a thermosensor. Unfolded proteins bind initially to DnaJ; upon interaction with the DnaJ-bound protein, DnaK hydrolyzes its bound ATP, resulting in the formation of a stable complex. GrpE releases ADP from DnaK; ATP binding to DnaK triggers the release of the substrate protein, thus completing the reaction cycle. Several rounds of ATP-dependent interactions between DnaJ, DnaK and GrpE are required for fully efficient folding. This Gloeobacter violaceus (strain ATCC 29082 / PCC 7421) protein is Protein GrpE.